An 839-amino-acid polypeptide reads, in one-letter code: Probable beta-glucosidase I (839 aa).

N-linked (GlcNAc...) asparagine glycosylation occurs at N197. D225 is a catalytic residue. Positions 395–555 constitute a PA14 domain; sequence DGKKGFSFRV…SQEELIAKAA (161 aa).

Belongs to the glycosyl hydrolase 3 family.

The protein localises to the secreted. The enzyme catalyses Hydrolysis of terminal, non-reducing beta-D-glucosyl residues with release of beta-D-glucose.. It participates in glycan metabolism; cellulose degradation. Beta-glucosidases are one of a number of cellulolytic enzymes involved in the degradation of cellulosic biomass. Catalyzes the last step releasing glucose from the inhibitory cellobiose. The sequence is that of Probable beta-glucosidase I (bglI) from Aspergillus terreus (strain NIH 2624 / FGSC A1156).